Here is a 231-residue protein sequence, read N- to C-terminus: Large ribosomal subunit protein uL1 (231 aa).

It belongs to the universal ribosomal protein uL1 family. Part of the 50S ribosomal subunit.

Functionally, binds directly to 23S rRNA. The L1 stalk is quite mobile in the ribosome, and is involved in E site tRNA release. Protein L1 is also a translational repressor protein, it controls the translation of the L11 operon by binding to its mRNA. The sequence is that of Large ribosomal subunit protein uL1 from Cellvibrio japonicus (strain Ueda107) (Pseudomonas fluorescens subsp. cellulosa).